The primary structure comprises 202 residues: Small ribosomal subunit protein uS5 (202 aa).

Residues leucine 46 to valine 109 form the S5 DRBM domain.

This sequence belongs to the universal ribosomal protein uS5 family. In terms of assembly, part of the 30S ribosomal subunit. Contacts protein S4.

In terms of biological role, with S4 and S12 plays an important role in translational accuracy. This is Small ribosomal subunit protein uS5 from Thermofilum pendens (strain DSM 2475 / Hrk 5).